The sequence spans 514 residues: Phospholipase C D (514 aa).

The tat-type signal signal peptide spans 1 to 37 (MSQSHIGGVSRREFLAKVAAGGAGALMSFAGPVIEKA). A disordered region spans residues 492 to 514 (VPDPQIMPTQETTPTRGIPSGPC).

The protein belongs to the bacterial phospholipase C family. Post-translationally, predicted to be exported by the Tat system. The position of the signal peptide cleavage has not been experimentally proven.

It is found in the secreted. The protein localises to the cell wall. The catalysed reaction is a 1,2-diacyl-sn-glycero-3-phosphocholine + H2O = phosphocholine + a 1,2-diacyl-sn-glycerol + H(+). In terms of biological role, involved in virulence. Induces cytotoxic effects on mouse macrophage cell lines, via direct or indirect enzymatic hydrolysis of cell membrane phospholipids. Hydrolyzes phosphatidylcholine. This Mycobacterium tuberculosis (strain CDC 1551 / Oshkosh) protein is Phospholipase C D.